A 1067-amino-acid polypeptide reads, in one-letter code: Kinesin-like protein KIF11-B (1067 aa).

Positions 18–359 (NIQVVVRCRP…LDYANRAKSI (342 aa)) constitute a Kinesin motor domain. 105 to 112 (GQTGTGKT) is a binding site for ATP. A coiled-coil region spans residues 365–480 (VNQKLTKKAL…SKEQLAQESF (116 aa)). The residue at position 937 (Thr-937) is a Phosphothreonine; by CDK1. Phosphoserine; by NEK6 is present on Ser-1046.

The protein belongs to the TRAFAC class myosin-kinesin ATPase superfamily. Kinesin family. BimC subfamily. In terms of assembly, heterotetramer of two heavy and two light chains. Interacts with aurka. In terms of processing, phosphorylation of Thr-937 during mitosis controls the association of this protein with the spindle apparatus. A subset of this protein primarily localized at the spindle pole is phosphorylated by NEK6 during mitosis. Post-translationally, phosphorylated on a serine residue by aurka. As to expression, in unfertilized eggs, shows highest expression in the germinal vesicle and radial yolk-poor channels. Also present in testis.

It localises to the cytoplasm. Its subcellular location is the cytoskeleton. The protein resides in the spindle pole. In terms of biological role, plus end-directed motor protein required for establishing a bipolar spindle. Associates with both interphase and spindle microtubules. May be involved in nuclear divisions taking place during the development of unfertilized eggs. Required in non-mitotic cells for transport of secretory proteins from the Golgi complex to the cell surface. This Xenopus laevis (African clawed frog) protein is Kinesin-like protein KIF11-B (kif11-b).